A 238-amino-acid chain; its full sequence is Uridylate kinase (238 aa).

Position 12 to 15 (12 to 15) interacts with ATP; sequence KLSG. Gly54 is a UMP binding site. 2 residues coordinate ATP: Gly55 and Arg59. UMP is bound by residues Asp74 and 135–142; that span reads TGNPYFTT. The ATP site is built by Thr162, Tyr168, and Asp171.

This sequence belongs to the UMP kinase family. Homohexamer.

Its subcellular location is the cytoplasm. It carries out the reaction UMP + ATP = UDP + ADP. It functions in the pathway pyrimidine metabolism; CTP biosynthesis via de novo pathway; UDP from UMP (UMPK route): step 1/1. Inhibited by UTP. Functionally, catalyzes the reversible phosphorylation of UMP to UDP. This is Uridylate kinase from Lawsonia intracellularis (strain PHE/MN1-00).